Here is a 398-residue protein sequence, read N- to C-terminus: Small ribosomal subunit protein mS29 (398 aa).

Residues 1–21 constitute a mitochondrion transit peptide; it reads MMLKGITRLISRIHKLDPGRF. The segment at 39–67 is disordered; that stretch reads QVPVESPRAISRTNENDPAKHGDQHEGQH. A compositionally biased stretch (basic and acidic residues) spans 52-66; sequence NENDPAKHGDQHEGQ. Residues Met100 and 128–135 each bind GTP; that span reads GEKGTGKT. 2 positions are modified to N6-acetyllysine: Lys175 and Lys207.

This sequence belongs to the mitochondrion-specific ribosomal protein mS29 family. In terms of assembly, component of the mitochondrial small ribosomal subunit (mt-SSU). Mature mammalian 55S mitochondrial ribosomes consist of a small (28S) and a large (39S) subunit. The 28S small subunit contains a 12S ribosomal RNA (12S mt-rRNA) and 30 different proteins. The 39S large subunit contains a 16S rRNA (16S mt-rRNA), a copy of mitochondrial valine transfer RNA (mt-tRNA(Val)), which plays an integral structural role, and 52 different proteins. Interacts with DELE1. Interacts with NOA1. In terms of tissue distribution, ubiquitous.

It is found in the mitochondrion. The catalysed reaction is GTP + H2O = GDP + phosphate + H(+). As a component of the mitochondrial small ribosomal subunit, it plays a role in the translation of mitochondrial mRNAs. Involved in mediating interferon-gamma-induced cell death. Displays GTPase activity in vitro. This Homo sapiens (Human) protein is Small ribosomal subunit protein mS29.